A 339-amino-acid polypeptide reads, in one-letter code: Uroporphyrinogen decarboxylase (339 aa).

Substrate is bound by residues 21–25, D71, Y146, S201, and H316; that span reads RQAGR.

The protein belongs to the uroporphyrinogen decarboxylase family. In terms of assembly, homodimer.

Its subcellular location is the cytoplasm. The catalysed reaction is uroporphyrinogen III + 4 H(+) = coproporphyrinogen III + 4 CO2. It participates in porphyrin-containing compound metabolism; protoporphyrin-IX biosynthesis; coproporphyrinogen-III from 5-aminolevulinate: step 4/4. Functionally, catalyzes the decarboxylation of four acetate groups of uroporphyrinogen-III to yield coproporphyrinogen-III. This chain is Uroporphyrinogen decarboxylase, found in Rickettsia canadensis (strain McKiel).